Reading from the N-terminus, the 263-residue chain is UPF0758 protein Pden_2304 (263 aa).

Residues 141–263 (VLTSWDALLD…ELSFRSEGLL (123 aa)) form the MPN domain. Residues histidine 212, histidine 214, and aspartate 225 each contribute to the Zn(2+) site. Residues 212 to 225 (HNHPSGDPTPSQAD) carry the JAMM motif motif.

The protein belongs to the UPF0758 family.

This is UPF0758 protein Pden_2304 from Paracoccus denitrificans (strain Pd 1222).